Here is a 341-residue protein sequence, read N- to C-terminus: Ribulose-5-phosphate reductase 1 (341 aa).

The Zn(2+) site is built by Cys38, His64, Glu65, and Glu144.

This sequence belongs to the zinc-containing alcohol dehydrogenase family. In terms of assembly, heterodimer together with TarI. Can also form a dimer of heterodimers. The cofactor is Zn(2+).

The enzyme catalyses D-ribitol 5-phosphate + NADP(+) = D-ribulose 5-phosphate + NADPH + H(+). The protein operates within cell wall biogenesis; poly(ribitol phosphate) teichoic acid biosynthesis. In terms of biological role, catalyzes the NADPH dependent reduction of D-ribulose 5-phosphate to D-ribitol 5-phosphate. This is Ribulose-5-phosphate reductase 1 from Staphylococcus aureus (strain NCTC 8325 / PS 47).